The primary structure comprises 89 residues: Mapacalcine (89 aa).

Glutamine 89 carries the glutamine amide modification.

As to quaternary structure, homodimer. Post-translationally, contains disulfide bonds which may also be involved in dimerization.

In terms of biological role, blocks calcium currents via interaction with a yet unknown target protein. Has no effect on L-type, T-type, N-type or P/Q-type voltage-gated calcium channels (VGCC). Has no effect on voltage-gated potassium or chloride channels. Blocks non-L-type VGCC calcium currents in mouse duodenal myocytes (IC(50)=0.2 uM). Blocks calcium influx induced by hypoxia/reoxygenation in rat hepatocytes. The chain is Mapacalcine from Pione vastifica (Boring sponge).